A 317-amino-acid chain; its full sequence is Apolipoprotein E (317 aa).

Residues 1 to 18 form the signal peptide; that stretch reads MKVLWAALLVTFLAGCQA. 8 repeat units span residues 80 to 101, 102 to 123, 124 to 145, 146 to 167, 168 to 189, 190 to 211, 212 to 233, and 234 to 255. The 8 X 22 AA approximate tandem repeats stretch occupies residues 80 to 255; it reads TLMDETMKEL…RLDEVKEQVA (176 aa). Residue methionine 143 is modified to Methionine sulfoxide. A Phosphoserine modification is found at serine 147. Positions 158–168 are LDL and other lipoprotein receptors binding; that stretch reads HLRKLRKRLLR. Position 162–165 (162–165) interacts with heparin; it reads LRKR. A lipid-binding and lipoprotein association region spans residues 210–290; the sequence is AATVGSLAGQ…SWFEPLVEDM (81 aa). An O-linked (GalNAc...) threonine glycan is attached at threonine 212. Position 229–236 (229–236) interacts with heparin; the sequence is GERLRARM. Residues 266–317 form a homooligomerization region; it reads QQISLQAEAFQARLKSWFEPLVEDMQRQWAGLVEKVQAAVGASTAPVPSDNH. Positions 278–290 are specificity for association with VLDL; that stretch reads RLKSWFEPLVEDM.

It belongs to the apolipoprotein A1/A4/E family. As to quaternary structure, homotetramer. May interact with ABCA1; functionally associated with ABCA1 in the biogenesis of HDLs. May interact with APP/A4 amyloid-beta peptide; the interaction is extremely stable in vitro but its physiological significance is unclear. May interact with MAPT. May interact with MAP2. In the cerebrospinal fluid, interacts with secreted SORL1. Interacts with PMEL; this allows the loading of PMEL luminal fragment on ILVs to induce fibril nucleation. APOE exists as multiple glycosylated and sialylated glycoforms within cells and in plasma. The extent of glycosylation and sialylation are tissue and context specific. Post-translationally, glycated in plasma VLDL. In terms of processing, phosphorylated by FAM20C in the extracellular medium.

The protein localises to the secreted. Its subcellular location is the extracellular space. The protein resides in the extracellular matrix. It is found in the extracellular vesicle. It localises to the endosome. The protein localises to the multivesicular body. APOE is an apolipoprotein, a protein associating with lipid particles, that mainly functions in lipoprotein-mediated lipid transport between organs via the plasma and interstitial fluids. APOE is a core component of plasma lipoproteins and is involved in their production, conversion and clearance. Apolipoproteins are amphipathic molecules that interact both with lipids of the lipoprotein particle core and the aqueous environment of the plasma. As such, APOE associates with chylomicrons, chylomicron remnants, very low density lipoproteins (VLDL) and intermediate density lipoproteins (IDL) but shows a preferential binding to high-density lipoproteins (HDL). It also binds a wide range of cellular receptors including the LDL receptor/LDLR, the LDL receptor-related proteins LRP1, LRP2 and LRP8 and the very low-density lipoprotein receptor/VLDLR that mediate the cellular uptake of the APOE-containing lipoprotein particles. Finally, APOE also has a heparin-binding activity and binds heparan-sulfate proteoglycans on the surface of cells, a property that supports the capture and the receptor-mediated uptake of APOE-containing lipoproteins by cells. A main function of APOE is to mediate lipoprotein clearance through the uptake of chylomicrons, VLDLs, and HDLs by hepatocytes. APOE is also involved in the biosynthesis by the liver of VLDLs as well as their uptake by peripheral tissues ensuring the delivery of triglycerides and energy storage in muscle, heart and adipose tissues. By participating in the lipoprotein-mediated distribution of lipids among tissues, APOE plays a critical role in plasma and tissues lipid homeostasis. APOE is also involved in two steps of reverse cholesterol transport, the HDLs-mediated transport of cholesterol from peripheral tissues to the liver, and thereby plays an important role in cholesterol homeostasis. First, it is functionally associated with ABCA1 in the biogenesis of HDLs in tissues. Second, it is enriched in circulating HDLs and mediates their uptake by hepatocytes. APOE also plays an important role in lipid transport in the central nervous system, regulating neuron survival and sprouting. In Rhinopithecus roxellana (Golden snub-nosed monkey), this protein is Apolipoprotein E (APOE).